The sequence spans 189 residues: Ribosome maturation factor RimM (189 aa).

The 80-residue stretch at 110–189 folds into the PRC barrel domain; the sequence is DDEYYWKDLI…TVTVDWDPNF (80 aa).

This sequence belongs to the RimM family. In terms of assembly, binds ribosomal protein uS19.

It localises to the cytoplasm. In terms of biological role, an accessory protein needed during the final step in the assembly of 30S ribosomal subunit, possibly for assembly of the head region. Essential for efficient processing of 16S rRNA. May be needed both before and after RbfA during the maturation of 16S rRNA. It has affinity for free ribosomal 30S subunits but not for 70S ribosomes. In Blochmanniella pennsylvanica (strain BPEN), this protein is Ribosome maturation factor RimM.